The primary structure comprises 590 residues: UvrABC system protein C (590 aa).

Positions 15–98 (AEPGVYQFVA…VKRHQPRYNV (84 aa)) constitute a GIY-YIG domain. The 36-residue stretch at 207–242 (GALADPLRREMAAAAQAEAFERAANLRDRLAVVEGF) folds into the UVR domain.

It belongs to the UvrC family. Interacts with UvrB in an incision complex.

Its subcellular location is the cytoplasm. Functionally, the UvrABC repair system catalyzes the recognition and processing of DNA lesions. UvrC both incises the 5' and 3' sides of the lesion. The N-terminal half is responsible for the 3' incision and the C-terminal half is responsible for the 5' incision. The sequence is that of UvrABC system protein C from Halobacterium salinarum (strain ATCC 29341 / DSM 671 / R1).